The primary structure comprises 187 residues: UPF0301 protein SG2023 (187 aa).

It belongs to the UPF0301 (AlgH) family.

In Sodalis glossinidius (strain morsitans), this protein is UPF0301 protein SG2023.